A 555-amino-acid chain; its full sequence is MIWVAVIITMLLFILVAKPTGIYLEKAFQGSKTLDKVFGPFEKLIFKITGVKAYNQTWKQYALSLVLLNGFMIVVVYFIFRLQGVLPLNPAHIEGMEPTLAFNTAISFMADTNLQHYSGENGLSYLSQLIGITFLMFAAPATTLALVMAFIRGLAGKELGNFFVDFTRALTRVFLPIAFIAALVFVALGVPQTLDGAVTAQTIEGAKQSILRGPVASFVSIKELGNNGGGFFGANSTHPFENPGQMSNILQMMLMMLLPTALPFTYGRMVGNKKQGRILFVSLFMVFLLGFITITTSELNGNPALNGMGIEHVQGSTEGKEVRFGTVFSSLYATVTTAAETGAVNTMHDTLTPIGGLVPLVNMMLNTVYGGVGAGFVNIIMYAIIAVFISGLMVGRTPEFLGKKIEGKEMKLIAVTILFHPLLILGFSALALSTNLGTDAISHSGFHGLTQVVYEYTSSAANNGSGFEGLGDNTPFWNITTGLVMFLGRYFSLITMLAVAASLKEKTVVPETVGTFRTDNSLFGGIFIGTIVIVGALTFFPMLVLGPIAEFLTLK.

Transmembrane regions (helical) follow at residues 2-22 (IWVA…PTGI), 60-80 (QYAL…YFIF), 130-150 (IGIT…VMAF), 173-193 (VFLP…VPQT), 246-266 (MSNI…PFTY), 278-298 (ILFV…TTSE), 374-394 (AGFV…GLMV), 412-432 (LIAV…ALAL), 483-503 (LVMF…AASL), and 525-545 (GIFI…MLVL).

This sequence belongs to the KdpA family. The system is composed of three essential subunits: KdpA, KdpB and KdpC.

It localises to the cell membrane. Its function is as follows. Part of the high-affinity ATP-driven potassium transport (or Kdp) system, which catalyzes the hydrolysis of ATP coupled with the electrogenic transport of potassium into the cytoplasm. This subunit binds the extracellular potassium ions and delivers the ions to the membrane domain of KdpB through an intramembrane tunnel. This is Potassium-transporting ATPase potassium-binding subunit from Bacillus cereus (strain G9842).